The following is a 273-amino-acid chain: Programmed cell death 1 ligand 2 (273 aa).

An N-terminal signal peptide occupies residues 1 to 19 (MIFLLLMLSLELQLHQIAA). At 20 to 220 (LFTVTVPKEL…SQMEPRTHPT (201 aa)) the chain is on the extracellular side. An Ig-like V-type domain is found at 21-118 (FTVTVPKELY…AWDYKYLTLK (98 aa)). N-linked (GlcNAc...) asparagine glycosylation is found at N37, N64, N157, N163, and N189. 2 disulfide bridges follow: C42-C102 and C143-C192. An Ig-like C2-type domain is found at 122–203 (SYRKINTHIL…FWNTHVRELT (82 aa)). A helical membrane pass occupies residues 221-241 (WLLHIFIPFCIIAFIFIATVI). Topologically, residues 242 to 273 (ALRKQLCQKLYSSKDTTKRPVTTTKREVNSAI) are cytoplasmic.

This sequence belongs to the immunoglobulin superfamily. BTN/MOG family. In terms of assembly, interacts with PDCD1. Highly expressed in heart, placenta, pancreas, lung and liver and weakly expressed in spleen, lymph nodes and thymus.

The protein localises to the secreted. It localises to the endomembrane system. The protein resides in the cell membrane. Involved in the costimulatory signal, essential for T-cell proliferation and IFNG production in a PDCD1-independent manner. Interaction with PDCD1 inhibits T-cell proliferation by blocking cell cycle progression and cytokine production. This Homo sapiens (Human) protein is Programmed cell death 1 ligand 2 (PDCD1LG2).